Reading from the N-terminus, the 506-residue chain is Trans-cinnamate 4-monooxygenase (506 aa).

A helical transmembrane segment spans residues 3-23; it reads LLLLEKTLLALFIAATIAVTI. (E)-cinnamate contacts are provided by residues 213–218 and alanine 307; that span reads RSRLAQ. A heme-binding site is contributed by cysteine 448.

It belongs to the cytochrome P450 family. Requires heme as cofactor.

Its subcellular location is the membrane. The catalysed reaction is (E)-cinnamate + reduced [NADPH--hemoprotein reductase] + O2 = (E)-4-coumarate + oxidized [NADPH--hemoprotein reductase] + H2O + H(+). It functions in the pathway phenylpropanoid metabolism; trans-4-coumarate biosynthesis; trans-4-coumarate from trans-cinnamate: step 1/1. Functionally, catalyzes the first oxidative step of the phenylpropanoid pathway in higher plants by transforming trans-cinnamate into p-coumarate. The compounds formed by this pathway are essential components for lignification, pollination, and defense against ultraviolet light, predators and pathogens. The sequence is that of Trans-cinnamate 4-monooxygenase (CYP73A3) from Medicago sativa (Alfalfa).